We begin with the raw amino-acid sequence, 280 residues long: uncharacterized protein (280 aa).

This sequence belongs to the eukaryotic-type primase small subunit family.

This is an uncharacterized protein from Archaeoglobus fulgidus (strain ATCC 49558 / DSM 4304 / JCM 9628 / NBRC 100126 / VC-16).